An 839-amino-acid chain; its full sequence is MSVDEKPGSPMYVYESTVHCANILLGLNDQRKKDILCDVTLIVERKEFRAHRAVLAACSEYFWQALVGQTKDDLVVSLPEEVTARGFGPLLQFAYTAKLLLSRENIREVIRCAEFLRMHNLEDSCFSFLQTQLLNREDGLFVCRKDSACQRPQEDHGNSAGEEEEEEETMDSETARMACATDQMLPDPISFEATAIPVAEKEEALLPESEVPTDTKENSEKGALTQYPRYKKYQLACTKNVYSAPSHGTSGFASTFSEDSPGNSLKPGLPMGQIKSEPPSEETEEESITLCLSGDETDIKDRPGDVEMDRKQPSPAPTPSTPTGAACLDRSRSVSSPSCLRSLFGITKGVESTGLPSTSQQPLVRSSACPFNKGISQGDLKTDYTPLAGNYGQPHVGQKDVSNFAMGSPLRGPGPETLCKQEGELDRRSVIFSASACDQPNTPVHSYSAVSNLDKDLSEPVPKSLWVGAGQSLPSSQAYSHSGLMADHLPGRIRPNTSCPVPIKVCPRSPPLETRTRTSSSCSSYSYAEDGSGGSPCSLPLCEFSSSPCSQGARFLATEHQEPGLMGDGMYNQVRPQIKCEQSYGTNSSDESGSFSEADSESCPVQDRGQEVKLPFPVDQITDLPRNDFQMMIKMHKLTSEQLEFIHDIRRRSKNRIAAQRCRKRKLDCIQNLECEIRKLVCEKEKLLSERNHLKACMGELLDNFSCLSQEVCRDIQSPEQIQALHRYCPVLIPMDLPGASVNPPPVGVEQSLAPSPCAVGGSVPCCLEPGAAPPGLPWVPSNTSENCTSGRRLEGSDPGTFSERGPPLEARSQSVTVDFCQEMTEKCTTDEQPRKDYA.

Residues 37–103 form the BTB domain; that stretch reads CDVTLIVERK…AYTAKLLLSR (67 aa). Disordered regions lie at residues 150–170 and 247–331; these read QRPQEDHGNSAGEEEEEEETM and HGTS…LDRS. Acidic residues predominate over residues 161-170; it reads GEEEEEEETM. Residues 247–263 are compositionally biased toward polar residues; that stretch reads HGTSGFASTFSEDSPGN. The span at 297-312 shows a compositional bias: basic and acidic residues; sequence TDIKDRPGDVEMDRKQ. The residue at position 314 (serine 314) is a Phosphoserine. Low complexity predominate over residues 321–331; sequence TPTGAACLDRS. Glycyl lysine isopeptide (Lys-Gly) (interchain with G-Cter in SUMO2) cross-links involve residues lysine 381 and lysine 420. Serine 520 bears the Phosphoserine mark. Residues 582 to 609 are disordered; the sequence is QSYGTNSSDESGSFSEADSESCPVQDRG. The segment covering 583–597 has biased composition (polar residues); the sequence is SYGTNSSDESGSFSE. One can recognise a bZIP domain in the interval 645-708; the sequence is FIHDIRRRSK…GELLDNFSCL (64 aa). The tract at residues 650–666 is basic motif; it reads RRRSKNRIAAQRCRKRK. Positions 670–677 are leucine-zipper; the sequence is IQNLECEI. A disordered region spans residues 778-813; sequence PWVPSNTSENCTSGRRLEGSDPGTFSERGPPLEARS. The segment covering 781–790 has biased composition (polar residues); that stretch reads PSNTSENCTS. The Nuclear export signal motif lies at 819-839; sequence DFCQEMTEKCTTDEQPRKDYA.

Belongs to the bZIP family. CNC subfamily. Homodimer; disulfide-linked. Heterodimer of BACH2 and Maf-related transcription factors. Post-translationally, the reversible disulfide bond may provide a mechanism to regulate the activity in oxidative stress responses. Phosphorylation at Ser-520 downstream of the PI-3K pathway promotes nuclear export. Detected in brain and spleen.

The protein localises to the cytoplasm. It localises to the nucleus. In terms of biological role, transcriptional regulator that acts as a repressor or activator. Binds to Maf recognition elements (MARE). Plays an important role in coordinating transcription activation and repression by MAFK. Induces apoptosis in response to oxidative stress through repression of the antiapoptotic factor HMOX1. Positively regulates the nuclear import of actin. Is a key regulator of adaptive immunity, crucial for the maintenance of regulatory T-cell function and B-cell maturation. The sequence is that of Transcription regulator protein BACH2 (Bach2) from Mus musculus (Mouse).